The primary structure comprises 242 residues: MFSNLHLPLNPIDKVNQPPVYYLQVQDGLIICSGLCWTTAYILYIRQAYRDKSYGMPLVCLCANIAWEFLFGAAIPESAAQVVSFFPWFVIDIGIVYTTWKFGREQWKHAPLVAQNLGWILLGGIAGMLVMFWAFLKTYDNRYEAGFYLAWTDQIIVSTTSVAQLMSRNNTSGHSWGIWFTRWIGSVFAELIFVWRYWNYPESYPVAATHVTIFLFIVTEVADLTYPFVYASLDKKEKKKLK.

The next 4 helical transmembrane spans lie at 25-45 (VQDGLIICSGLCWTTAYILYI), 55-75 (GMPLVCLCANIAWEFLFGAAI), 80-100 (AQVVSFFPWFVIDIGIVYTTW), and 116-136 (NLGWILLGGIAGMLVMFWAFL). Asparagine 170 carries an N-linked (GlcNAc...) asparagine glycan. 2 helical membrane passes run 175-195 (SWGIWFTRWIGSVFAELIFVW) and 211-231 (VTIFLFIVTEVADLTYPFVYA).

It belongs to the paxB family.

Its subcellular location is the membrane. The protein operates within secondary metabolite biosynthesis; terpenoid biosynthesis. Its function is as follows. Terpene cyclase; part of the gene cluster that mediates the biosynthesis of the phthalide-terpenoid hybrid 11'-O-desmethylfendlerol. Within the pathway, mfmH catalyzes the last step and cyclizes the prenyl unit of 5-O-farnesylcyclopolic acid into a drimane-like structure to yield 11'-O-desmethylfendlerol. The biosynthesis of 11'-O-desmethylfendlerol begins with the NR-PKS mfmB that forms 3,5-dimethylorsellinic acid (DMOA), which is then transformed into the phthalide 5,7-dihydroxy-4-(hydroxymethyl)-6-methylphthalide by the cytochrome P450 monooxygenase mfmA and the hydrolase mfmC. Subsequently, the methyltransferase mfmE catalyzes 7-O-methylation to yield 5-hydroxy-4-(hydroxymethyl)-7-methoxy-6-methylphthalide, which undergoes C-3 hydroxylation by the cytochrome P450 monooxygenase mfmF. The resultant cyclopolic acid (2,5-dihydroxy-4-(hydroxymethyl)-7-methoxy-6-methylphthalide) is then farnesylated by the DMATS-type prenyltransferase mfmD to afford 5-O-farnesylcyclopolic acid. Finally, the Pyr4-family terpene cyclase mfmH cyclizes the farnesyl moiety of 5-O-farnesylcyclopolic acid into a drimane-like structure, thus completing the biosynthesis of 11'-O-desmethylfendlerol. This is Pyr4-family terpene cyclase mfmH from Annulohypoxylon moriforme (Filamentous fungus).